The chain runs to 67 residues: Epsilon-conotoxin TxVA (67 aa).

Residues 1 to 19 (MRCFPVFIILLLLIASAPC) form the signal peptide. A propeptide spanning residues 20–50 (FDARTKTDDDVPLSSLRDNLKRTIRTRLNIR) is cleaved from the precursor. 4-carboxyglutamate is present on residues Glu-51 and Glu-54. Cystine bridges form between Cys-52-Cys-58 and Cys-53-Cys-59. Trp-57 bears the 6'-bromotryptophan mark. Thr-60 carries an O-linked (GalNAc...) threonine glycan. At Pro-63 the chain carries 4-hydroxyproline. Residues 64 to 67 (LTGR) constitute a propeptide that is removed on maturation.

Post-translationally, O-glycan consists of the disaccharide Gal-GalNAc. As to expression, expressed by the venom duct.

Its subcellular location is the secreted. Its function is as follows. Epsilon-conotoxins act at presynaptic membranes, blocking the calcium channels or G protein-coupled receptors. Causes hyperactivity upon intracranial injection into mice. Causes dorsal fins drooping in fish. The chain is Epsilon-conotoxin TxVA from Conus textile (Cloth-of-gold cone).